The following is a 253-amino-acid chain: MDIIICKDEQEVGKAAAALIAPFATKGGTLGLATGSSPLSTYQELIRMYEAGEVSFKNCKAFLLDEYVGLTRDDENSYFKTIRKEFTDHIDIVDEEVYSPDGANPDPYEAAAEYEAKIAAESVDVQILGIGGNGHIAFNEPSSSLSGLTKVQALHPKTVEDNARFFNTIEEVPTHALTQGLGTLSRAQNIVLVATGEGKADAIRGTVEGPVTASCPGSILQMHNNATIIVDEAAASKLENADHYRLMEQLKLR.

D65 (proton acceptor; for enolization step) is an active-site residue. Residue N133 is the For ring-opening step of the active site. H135 functions as the Proton acceptor; for ring-opening step in the catalytic mechanism. Catalysis depends on E140, which acts as the For ring-opening step.

Belongs to the glucosamine/galactosamine-6-phosphate isomerase family. NagB subfamily.

It catalyses the reaction alpha-D-glucosamine 6-phosphate + H2O = beta-D-fructose 6-phosphate + NH4(+). Its pathway is amino-sugar metabolism; N-acetylneuraminate degradation; D-fructose 6-phosphate from N-acetylneuraminate: step 5/5. In terms of biological role, catalyzes the reversible isomerization-deamination of glucosamine 6-phosphate (GlcN6P) to form fructose 6-phosphate (Fru6P) and ammonium ion. The protein is Glucosamine-6-phosphate deaminase of Corynebacterium glutamicum (strain R).